The chain runs to 342 residues: Delta(6)-protoilludene synthase (342 aa).

The Mg(2+) site is built by D81, N217, S221, and E225. Positions 81 to 85 (DEYSD) match the DDXXD motif motif. Positions 306 and 307 each coordinate (2E,6E)-farnesyl diphosphate.

This sequence belongs to the terpene synthase family. Mg(2+) serves as cofactor.

It catalyses the reaction (2E,6E)-farnesyl diphosphate = Delta(6)-protoilludene + diphosphate. Functionally, delta(6)-protoilludene synthase, part of the gene cluster that mediates the biosynthesis of melleolides, a range of antifungal and phytotoxic polyketide derivatives composed of an orsellinic acid (OA) moiety esterified to various sesquiterpene alcohols. The first step in melleolides biosynthesis is performed by the delta(6)-protoilludene synthase PRO1 which catalyzes the cyclization of farnesyl diphosphate to protoilludene. The orsellinic acid synthase armB produces OA by condensing acetyl-CoA with 3 malonyl-CoA units in a three-round chain elongation reaction folowed by a C2-C7 ring closure. ArmB further catalyzes the trans-esterification of OA to the various sesquiterpene alcohols resulting from the hydroxylation of protoilludene. The melleolides cluster also includes 5 cytochrome P450 monooxygenases, 4 NAD(+)-dependent oxidoreductases, one flavin-dependent oxidoreductase, and one O-methyltransferase. The cytochrome P450 monooxygenases may be involved in protoilludene hydroxylation to elaborate melleolides with multiple alcohol groups, such as melleolide D, which carries alcohol functionalities at C-4, C-5, C-10, and C-13. The role of the NAD(+)-dependent enzymes remains unknown. Numerous melleolides, including arnamial, show 5'-O-methylation of the aromatic moiety which may be catalyzed by the methyltransferase encoded in the cluster. The flavin-dependent oxidoreductase might represent the dehydrogenase yielding the aldehyde in position 1 of arnamial and other melleolides. Finally, several halogenases, localized outside of the cluster, are able to catalyze the transfer of a single chlorine atom to the melleolide backbone, resulting in a 6'-chloromelleolide product. This is Delta(6)-protoilludene synthase from Armillaria ostoyae (Armillaria root rot fungus).